A 319-amino-acid chain; its full sequence is Cytochrome c biogenesis protein CcsA (319 aa).

7 helical membrane passes run 17 to 37, 44 to 64, 68 to 88, 143 to 163, 223 to 243, 257 to 271, and 286 to 306; these read TISI…LGGL, GMIV…ASSG, LSNL…LHTI, MLLS…ILII, VISL…VWAN, TWAF…IYLH, and VASI…LLGI.

The protein belongs to the CcmF/CycK/Ccl1/NrfE/CcsA family. In terms of assembly, may interact with Ccs1.

The protein localises to the plastid. Its subcellular location is the chloroplast thylakoid membrane. Functionally, required during biogenesis of c-type cytochromes (cytochrome c6 and cytochrome f) at the step of heme attachment. This Lolium perenne (Perennial ryegrass) protein is Cytochrome c biogenesis protein CcsA.